Here is a 215-residue protein sequence, read N- to C-terminus: 3,4-dihydroxy-2-butanone 4-phosphate synthase (215 aa).

Residues 38–39, aspartate 43, 151–155, and glutamate 175 contribute to the D-ribulose 5-phosphate site; these read RE and RRGHT. Glutamate 39 lines the Mg(2+) pocket. Histidine 154 is a Mg(2+) binding site.

It belongs to the DHBP synthase family. As to quaternary structure, homodimer. Mg(2+) is required as a cofactor. Mn(2+) serves as cofactor.

It carries out the reaction D-ribulose 5-phosphate = (2S)-2-hydroxy-3-oxobutyl phosphate + formate + H(+). It participates in cofactor biosynthesis; riboflavin biosynthesis; 2-hydroxy-3-oxobutyl phosphate from D-ribulose 5-phosphate: step 1/1. In terms of biological role, catalyzes the conversion of D-ribulose 5-phosphate to formate and 3,4-dihydroxy-2-butanone 4-phosphate. The protein is 3,4-dihydroxy-2-butanone 4-phosphate synthase of Haemophilus influenzae (strain ATCC 51907 / DSM 11121 / KW20 / Rd).